The sequence spans 482 residues: Interferon-induced protein with tetratricopeptide repeats 5 (482 aa).

8 TPR repeats span residues 51-84 (LALY…IQQE), 94-127 (LVTW…CKKL), 138-173 (PETD…EPDN), 181-214 (AITV…NPDN), 249-282 (PYVL…TPTS), 338-371 (AFAY…ENIT), 376-410 (HQIH…KDRS), and 435-468 (VQSL…DPEN). The segment at 254–260 (YAAKFYR) is interaction with the 5'-triphosphate group of PPP-RNA.

It belongs to the IFIT family. Monomer. Interacts with MAP3K7 and the components of the IKK core complex CHUK, IKBKB and IKBKG; the interaction synergizes the recruitment of IKK to MAP3K7 and enhances IKK phosphorylation.

It localises to the cell projection. The protein resides in the ruffle membrane. Interferon-induced RNA-binding protein involved in the human innate immune response. Has a broad and adaptable RNA structure recognition important for RNA recognition specificity in antiviral defense. Binds precursor and processed tRNAs as well as poly-U-tailed tRNA fragments. Specifically binds single-stranded RNA bearing a 5'-triphosphate group (PPP-RNA), thereby acting as a sensor of viral single-stranded RNAs. Single-stranded PPP-RNAs, which lack 2'-O-methylation of the 5' cap and bear a 5'-triphosphate group instead, are specific from viruses, providing a molecular signature to distinguish between self and non-self mRNAs by the host during viral infection. Directly binds PPP-RNA in a non-sequence-specific manner. Also recognizes and selectively binds AT-rich dsDNA. Additionally, as a mediator in innate immunity, positively regulates IKK-NFKB signaling by sinergizing the recruitment of IKK to MAP3K7. The polypeptide is Interferon-induced protein with tetratricopeptide repeats 5 (IFIT5) (Homo sapiens (Human)).